The chain runs to 713 residues: Polyribonucleotide nucleotidyltransferase (713 aa).

Positions 491 and 497 each coordinate Mg(2+). The 60-residue stretch at 558-617 folds into the KH domain; that stretch reads PRMITIKINPEKIRDVIGKGGSVIRALTEETGTTIDISDDGVVTIASTSSDGMAEAKKRI. Residues 627–695 form the S1 motif domain; sequence GQVYEGTVLK…EKGRVRLSAK (69 aa).

The protein belongs to the polyribonucleotide nucleotidyltransferase family. Requires Mg(2+) as cofactor.

It is found in the cytoplasm. The enzyme catalyses RNA(n+1) + phosphate = RNA(n) + a ribonucleoside 5'-diphosphate. Functionally, involved in mRNA degradation. Catalyzes the phosphorolysis of single-stranded polyribonucleotides processively in the 3'- to 5'-direction. The chain is Polyribonucleotide nucleotidyltransferase from Burkholderia cenocepacia (strain ATCC BAA-245 / DSM 16553 / LMG 16656 / NCTC 13227 / J2315 / CF5610) (Burkholderia cepacia (strain J2315)).